The chain runs to 441 residues: ATP-dependent protease ATPase subunit HslU (441 aa).

Residues Ile18, Gly60–Glu65, Asp254, Glu319, and Arg391 each bind ATP.

Belongs to the ClpX chaperone family. HslU subfamily. As to quaternary structure, a double ring-shaped homohexamer of HslV is capped on each side by a ring-shaped HslU homohexamer. The assembly of the HslU/HslV complex is dependent on binding of ATP.

It is found in the cytoplasm. ATPase subunit of a proteasome-like degradation complex; this subunit has chaperone activity. The binding of ATP and its subsequent hydrolysis by HslU are essential for unfolding of protein substrates subsequently hydrolyzed by HslV. HslU recognizes the N-terminal part of its protein substrates and unfolds these before they are guided to HslV for hydrolysis. This Shewanella halifaxensis (strain HAW-EB4) protein is ATP-dependent protease ATPase subunit HslU.